We begin with the raw amino-acid sequence, 92 residues long: Major allergen I polypeptide chain 1 (92 aa).

Positions 1 to 22 (MKGACVLVLLWAALLLISGGNC) are cleaved as a signal peptide.

It belongs to the secretoglobin family. In terms of assembly, heterotetramer composed of two non-covalently linked disulfide-linked heterodimer of chains 1 and 2. Saliva and sebaceous glands.

Its subcellular location is the secreted. The protein is Major allergen I polypeptide chain 1 (CH1) of Felis catus (Cat).